A 165-amino-acid polypeptide reads, in one-letter code: Large ribosomal subunit protein uL10 (165 aa).

Belongs to the universal ribosomal protein uL10 family. As to quaternary structure, part of the ribosomal stalk of the 50S ribosomal subunit. The N-terminus interacts with L11 and the large rRNA to form the base of the stalk. The C-terminus forms an elongated spine to which L12 dimers bind in a sequential fashion forming a multimeric L10(L12)X complex.

In terms of biological role, forms part of the ribosomal stalk, playing a central role in the interaction of the ribosome with GTP-bound translation factors. The polypeptide is Large ribosomal subunit protein uL10 (Burkholderia mallei (strain NCTC 10229)).